The primary structure comprises 271 residues: Ribosomal RNA small subunit methyltransferase A (271 aa).

6 residues coordinate S-adenosyl-L-methionine: Asn-28, Leu-30, Gly-54, Glu-75, Asp-99, and Asn-117.

It belongs to the class I-like SAM-binding methyltransferase superfamily. rRNA adenine N(6)-methyltransferase family. RsmA subfamily.

The protein resides in the cytoplasm. The enzyme catalyses adenosine(1518)/adenosine(1519) in 16S rRNA + 4 S-adenosyl-L-methionine = N(6)-dimethyladenosine(1518)/N(6)-dimethyladenosine(1519) in 16S rRNA + 4 S-adenosyl-L-homocysteine + 4 H(+). Specifically dimethylates two adjacent adenosines (A1518 and A1519) in the loop of a conserved hairpin near the 3'-end of 16S rRNA in the 30S particle. May play a critical role in biogenesis of 30S subunits. The sequence is that of Ribosomal RNA small subunit methyltransferase A from Thermus thermophilus (strain ATCC BAA-163 / DSM 7039 / HB27).